A 220-amino-acid polypeptide reads, in one-letter code: Phosphatidylserine decarboxylase proenzyme (220 aa).

Ser189 functions as the Schiff-base intermediate with substrate; via pyruvic acid in the catalytic mechanism. Residue Ser189 is modified to Pyruvic acid (Ser); by autocatalysis.

It belongs to the phosphatidylserine decarboxylase family. PSD-A subfamily. Heterodimer of a large membrane-associated beta subunit and a small pyruvoyl-containing alpha subunit. Requires pyruvate as cofactor. Post-translationally, is synthesized initially as an inactive proenzyme. Formation of the active enzyme involves a self-maturation process in which the active site pyruvoyl group is generated from an internal serine residue via an autocatalytic post-translational modification. Two non-identical subunits are generated from the proenzyme in this reaction, and the pyruvate is formed at the N-terminus of the alpha chain, which is derived from the carboxyl end of the proenzyme. The post-translation cleavage follows an unusual pathway, termed non-hydrolytic serinolysis, in which the side chain hydroxyl group of the serine supplies its oxygen atom to form the C-terminus of the beta chain, while the remainder of the serine residue undergoes an oxidative deamination to produce ammonia and the pyruvoyl prosthetic group on the alpha chain.

Its subcellular location is the cell membrane. The enzyme catalyses a 1,2-diacyl-sn-glycero-3-phospho-L-serine + H(+) = a 1,2-diacyl-sn-glycero-3-phosphoethanolamine + CO2. The protein operates within phospholipid metabolism; phosphatidylethanolamine biosynthesis; phosphatidylethanolamine from CDP-diacylglycerol: step 2/2. Catalyzes the formation of phosphatidylethanolamine (PtdEtn) from phosphatidylserine (PtdSer). The sequence is that of Phosphatidylserine decarboxylase proenzyme from Pelobacter propionicus (strain DSM 2379 / NBRC 103807 / OttBd1).